The following is a 358-amino-acid chain: MNADPPRAPRRAPLEAFLTQQWLRRGPVAWALRPLAALYGAAVALRNRRYRLTPGRSVRVGRPVVVIGNRIAGGAGKTPTVIAVLAHLRRQGWQPGVVSRGHGRTALGVQAVAADTPADVVGDEPLLIHLRSGAPVVVGRDRVAAAAALLRARPEIDVIVADDGLQHRRLARDVEVVVFDARGAGNGWLLPAGPLREPIDTPTGAGTALVLYNADRPSTPLPGYATRRALTGAVALAAWWQGTPAAAATLASLRGRPVLACAGIAQPQRFFEQLRHAGLDVQEQALPDHAAFDALPWPAATPDVIVTEKDAVKLPVDRVRRERPGTRVWVAPLDFSPEPAFFAALDTALAPLSPRREG.

Residue 71-78 participates in ATP binding; it reads IAGGAGKT.

Belongs to the LpxK family.

It catalyses the reaction a lipid A disaccharide + ATP = a lipid IVA + ADP + H(+). The protein operates within glycolipid biosynthesis; lipid IV(A) biosynthesis; lipid IV(A) from (3R)-3-hydroxytetradecanoyl-[acyl-carrier-protein] and UDP-N-acetyl-alpha-D-glucosamine: step 6/6. Functionally, transfers the gamma-phosphate of ATP to the 4'-position of a tetraacyldisaccharide 1-phosphate intermediate (termed DS-1-P) to form tetraacyldisaccharide 1,4'-bis-phosphate (lipid IVA). This is Tetraacyldisaccharide 4'-kinase from Methylibium petroleiphilum (strain ATCC BAA-1232 / LMG 22953 / PM1).